An 83-amino-acid polypeptide reads, in one-letter code: NAD(P)H-quinone oxidoreductase subunit L (83 aa).

2 helical membrane-spanning segments follow: residues L15–A35 and L53–L73.

The protein belongs to the complex I NdhL subunit family. NDH-1 can be composed of about 15 different subunits; different subcomplexes with different compositions have been identified which probably have different functions.

The protein resides in the cellular thylakoid membrane. It carries out the reaction a plastoquinone + NADH + (n+1) H(+)(in) = a plastoquinol + NAD(+) + n H(+)(out). It catalyses the reaction a plastoquinone + NADPH + (n+1) H(+)(in) = a plastoquinol + NADP(+) + n H(+)(out). Its function is as follows. NDH-1 shuttles electrons from an unknown electron donor, via FMN and iron-sulfur (Fe-S) centers, to quinones in the respiratory and/or the photosynthetic chain. The immediate electron acceptor for the enzyme in this species is believed to be plastoquinone. Couples the redox reaction to proton translocation, and thus conserves the redox energy in a proton gradient. Cyanobacterial NDH-1 also plays a role in inorganic carbon-concentration. The chain is NAD(P)H-quinone oxidoreductase subunit L from Synechococcus sp. (strain CC9605).